The primary structure comprises 280 residues: uncharacterized protein (280 aa).

The N-terminal 51 residues, 1-51 (MATSLLLRHSSAVFFSQSSFFTKNKSFRSFTSIKMEKGEAENAVKTKKVFV), are a transit peptide targeting the chloroplast.

It belongs to the NAD(P)-dependent epimerase/dehydratase family.

The protein resides in the plastid. It is found in the chloroplast. It localises to the plastoglobule. This is an uncharacterized protein from Arabidopsis thaliana (Mouse-ear cress).